We begin with the raw amino-acid sequence, 65 residues long: Large ribosomal subunit protein bL35 (65 aa).

The disordered stretch occupies residues 1 to 22 (MPKIKTVRGAAKRFKKTGKGGF). The span at 10-22 (AAKRFKKTGKGGF) shows a compositional bias: basic residues.

Belongs to the bacterial ribosomal protein bL35 family.

The polypeptide is Large ribosomal subunit protein bL35 (Escherichia coli O127:H6 (strain E2348/69 / EPEC)).